A 188-amino-acid chain; its full sequence is Pyridoxal 5'-phosphate synthase subunit PdxT (188 aa).

Residue Gly46–Ser48 participates in L-glutamine binding. The Nucleophile role is filled by Cys78. L-glutamine is bound by residues Arg105 and Ile134–Arg135. Active-site charge relay system residues include His170 and Glu172.

It belongs to the glutaminase PdxT/SNO family. In terms of assembly, in the presence of PdxS, forms a dodecamer of heterodimers. Only shows activity in the heterodimer.

The catalysed reaction is aldehydo-D-ribose 5-phosphate + D-glyceraldehyde 3-phosphate + L-glutamine = pyridoxal 5'-phosphate + L-glutamate + phosphate + 3 H2O + H(+). The enzyme catalyses L-glutamine + H2O = L-glutamate + NH4(+). It functions in the pathway cofactor biosynthesis; pyridoxal 5'-phosphate biosynthesis. Its function is as follows. Catalyzes the hydrolysis of glutamine to glutamate and ammonia as part of the biosynthesis of pyridoxal 5'-phosphate. The resulting ammonia molecule is channeled to the active site of PdxS. The sequence is that of Pyridoxal 5'-phosphate synthase subunit PdxT from Moorella thermoacetica (strain ATCC 39073 / JCM 9320).